A 511-amino-acid chain; its full sequence is Lysine--tRNA ligase (511 aa).

Mg(2+)-binding residues include glutamate 421 and glutamate 428.

Belongs to the class-II aminoacyl-tRNA synthetase family. As to quaternary structure, homodimer. It depends on Mg(2+) as a cofactor.

It is found in the cytoplasm. It catalyses the reaction tRNA(Lys) + L-lysine + ATP = L-lysyl-tRNA(Lys) + AMP + diphosphate. The sequence is that of Lysine--tRNA ligase from Janthinobacterium sp. (strain Marseille) (Minibacterium massiliensis).